The following is a 156-amino-acid chain: Peptide deformylase 1 (156 aa).

Residues C90 and H132 each contribute to the Fe cation site. E133 is an active-site residue. Position 136 (H136) interacts with Fe cation.

It belongs to the polypeptide deformylase family. It depends on Fe(2+) as a cofactor.

It catalyses the reaction N-terminal N-formyl-L-methionyl-[peptide] + H2O = N-terminal L-methionyl-[peptide] + formate. Its function is as follows. Removes the formyl group from the N-terminal Met of newly synthesized proteins. Requires at least a dipeptide for an efficient rate of reaction. N-terminal L-methionine is a prerequisite for activity but the enzyme has broad specificity at other positions. This is Peptide deformylase 1 from Bacillus anthracis.